The chain runs to 194 residues: Peptidyl-tRNA hydrolase (194 aa).

Tyr17 lines the tRNA pocket. His22 serves as the catalytic Proton acceptor. 3 residues coordinate tRNA: Tyr68, Asn70, and Asn116.

It belongs to the PTH family. Monomer.

It localises to the cytoplasm. The enzyme catalyses an N-acyl-L-alpha-aminoacyl-tRNA + H2O = an N-acyl-L-amino acid + a tRNA + H(+). Functionally, hydrolyzes ribosome-free peptidyl-tRNAs (with 1 or more amino acids incorporated), which drop off the ribosome during protein synthesis, or as a result of ribosome stalling. Catalyzes the release of premature peptidyl moieties from peptidyl-tRNA molecules trapped in stalled 50S ribosomal subunits, and thus maintains levels of free tRNAs and 50S ribosomes. This Chromohalobacter salexigens (strain ATCC BAA-138 / DSM 3043 / CIP 106854 / NCIMB 13768 / 1H11) protein is Peptidyl-tRNA hydrolase.